The chain runs to 172 residues: Adenine phosphoribosyltransferase (172 aa).

Belongs to the purine/pyrimidine phosphoribosyltransferase family. In terms of assembly, homodimer.

It is found in the cytoplasm. It catalyses the reaction AMP + diphosphate = 5-phospho-alpha-D-ribose 1-diphosphate + adenine. It participates in purine metabolism; AMP biosynthesis via salvage pathway; AMP from adenine: step 1/1. In terms of biological role, catalyzes a salvage reaction resulting in the formation of AMP, that is energically less costly than de novo synthesis. In Picosynechococcus sp. (strain ATCC 27264 / PCC 7002 / PR-6) (Agmenellum quadruplicatum), this protein is Adenine phosphoribosyltransferase.